A 419-amino-acid polypeptide reads, in one-letter code: UDP-N-acetylglucosamine 1-carboxyvinyltransferase (419 aa).

22 to 23 contributes to the phosphoenolpyruvate binding site; the sequence is KN. Arg-92 serves as a coordination point for UDP-N-acetyl-alpha-D-glucosamine. Cys-116 serves as the catalytic Proton donor. Cys-116 is subject to 2-(S-cysteinyl)pyruvic acid O-phosphothioketal. UDP-N-acetyl-alpha-D-glucosamine-binding residues include Asp-307 and Val-329.

The protein belongs to the EPSP synthase family. MurA subfamily.

The protein resides in the cytoplasm. The enzyme catalyses phosphoenolpyruvate + UDP-N-acetyl-alpha-D-glucosamine = UDP-N-acetyl-3-O-(1-carboxyvinyl)-alpha-D-glucosamine + phosphate. It functions in the pathway cell wall biogenesis; peptidoglycan biosynthesis. Functionally, cell wall formation. Adds enolpyruvyl to UDP-N-acetylglucosamine. The chain is UDP-N-acetylglucosamine 1-carboxyvinyltransferase from Pseudothermotoga lettingae (strain ATCC BAA-301 / DSM 14385 / NBRC 107922 / TMO) (Thermotoga lettingae).